The sequence spans 20 residues: Photosystem II stability/assembly factor HCF136, chloroplastic (20 aa).

The protein belongs to the Ycf48 family.

It localises to the plastid. The protein localises to the chloroplast thylakoid lumen. Essential for photosystem II (PSII) biogenesis; required for assembly of an early intermediate in PSII assembly that includes D2 (psbD) and cytochrome b559. This chain is Photosystem II stability/assembly factor HCF136, chloroplastic, found in Spinacia oleracea (Spinach).